Here is a 241-residue protein sequence, read N- to C-terminus: Carboxy-S-adenosyl-L-methionine synthase (241 aa).

S-adenosyl-L-methionine-binding positions include Tyr-38, 63–65, 88–89, 116–117, Asn-131, and Arg-198; these read GCS, DN, and DI.

Belongs to the class I-like SAM-binding methyltransferase superfamily. Cx-SAM synthase family. Homodimer.

The enzyme catalyses prephenate + S-adenosyl-L-methionine = carboxy-S-adenosyl-L-methionine + 3-phenylpyruvate + H2O. Catalyzes the conversion of S-adenosyl-L-methionine (SAM) to carboxy-S-adenosyl-L-methionine (Cx-SAM). The chain is Carboxy-S-adenosyl-L-methionine synthase from Histophilus somni (strain 129Pt) (Haemophilus somnus).